The following is a 272-amino-acid chain: NH(3)-dependent NAD(+) synthetase (272 aa).

45–52 (GISGGQDS) contacts ATP. A Mg(2+)-binding site is contributed by Asp51. Arg138 contacts deamido-NAD(+). Thr158 contacts ATP. Glu163 is a Mg(2+) binding site. Deamido-NAD(+) contacts are provided by Lys171 and Asp178. ATP contacts are provided by Lys187 and Thr209. Deamido-NAD(+) is bound at residue 258-259 (HK).

Belongs to the NAD synthetase family. As to quaternary structure, homodimer.

It carries out the reaction deamido-NAD(+) + NH4(+) + ATP = AMP + diphosphate + NAD(+) + H(+). It functions in the pathway cofactor biosynthesis; NAD(+) biosynthesis; NAD(+) from deamido-NAD(+) (ammonia route): step 1/1. Its function is as follows. Catalyzes the ATP-dependent amidation of deamido-NAD to form NAD. Uses ammonia as a nitrogen source. In Bacillus cereus (strain ATCC 14579 / DSM 31 / CCUG 7414 / JCM 2152 / NBRC 15305 / NCIMB 9373 / NCTC 2599 / NRRL B-3711), this protein is NH(3)-dependent NAD(+) synthetase.